The sequence spans 169 residues: N-alpha-acetyltransferase 50 (169 aa).

One can recognise an N-acetyltransferase domain in the interval 6–155 (IELGDVTPHN…DAHVLQKNLK (150 aa)). Thr12 carries the post-translational modification Phosphothreonine. Tyr31 is a substrate binding site. Residues Lys34 and Lys37 each carry the N6-acetyllysine modification. Tyr73 is an active-site residue. Position 75 (Met75) interacts with substrate. An acetyl-CoA-binding site is contributed by 77–90 (LGCLAPYRRLGIGT). Tyr110 carries the phosphotyrosine modification. His112 is a catalytic residue. 117 to 126 (NESAIDFYRK) serves as a coordination point for CoA. The tract at residues 138–141 (YYKR) is substrate. The residue at position 140 (Lys140) is an N6-acetyllysine.

It belongs to the acetyltransferase family. GNAT subfamily. Component of the N-terminal acetyltransferase E (NatE) complex at least composed of NAA10, NAA15 and NAA50. Interacts with NAA10. Interacts with NAA15. Predominantly interacts with NAA15 in the N-terminal acetyltransferase A complex (NatA complex); the interactions reduce the acetylation activity of the NatA complex. Component of the N-terminal acetyltransferase E (NatE)/HYPK complex at least composed of NAA10, NAA15, NAA50 and HYPK. Within the complex interacts with NAA15. Its capacity to interact with the NatA complex is reduced by HYPK. Interacts with NAA35.

Its subcellular location is the cytoplasm. It is found in the nucleus. It carries out the reaction N-terminal L-methionyl-L-alanyl-[protein] + acetyl-CoA = N-terminal N(alpha)-acetyl-L-methionyl-L-alanyl-[protein] + CoA + H(+). The catalysed reaction is N-terminal L-methionyl-L-seryl-[protein] + acetyl-CoA = N-terminal N(alpha)-acetyl-L-methionyl-L-seryl-[protein] + CoA + H(+). The enzyme catalyses N-terminal L-methionyl-L-valyl-[protein] + acetyl-CoA = N-terminal N(alpha)-acetyl-L-methionyl-L-valyl-[protein] + CoA + H(+). It catalyses the reaction N-terminal L-methionyl-L-threonyl-[protein] + acetyl-CoA = N-terminal N(alpha)-acetyl-L-methionyl-L-threonyl-[protein] + CoA + H(+). It carries out the reaction N-terminal L-methionyl-L-lysyl-[protein] + acetyl-CoA = N-terminal N(alpha)-acetyl-L-methionyl-L-lysyl-[protein] + CoA + H(+). The catalysed reaction is N-terminal L-methionyl-L-leucyl-[protein] + acetyl-CoA = N-terminal N(alpha)-acetyl-L-methionyl-L-leucyl-[protein] + CoA + H(+). The enzyme catalyses N-terminal L-methionyl-L-phenylalanyl-[protein] + acetyl-CoA = N-terminal N(alpha)-acetyl-L-methionyl-L-phenylalanyl-[protein] + CoA + H(+). It catalyses the reaction N-terminal L-methionyl-L-tyrosyl-[protein] + acetyl-CoA = N-terminal N(alpha)-acetyl-L-methionyl-L-tyrosyl-[protein] + CoA + H(+). Its function is as follows. N-alpha-acetyltransferase that acetylates the N-terminus of proteins that retain their initiating methionine. Has a broad substrate specificity: able to acetylate the initiator methionine of most peptides, except for those with a proline in second position. Also displays N-epsilon-acetyltransferase activity by mediating acetylation of the side chain of specific lysines on proteins. Autoacetylates in vivo. The relevance of N-epsilon-acetyltransferase activity is however unclear: able to acetylate H4 in vitro, but this result has not been confirmed in vivo. Component of N-alpha-acetyltransferase complexes containing NAA10 and NAA15, which has N-alpha-acetyltransferase activity. Does not influence the acetyltransferase activity of NAA10. However, it negatively regulates the N-alpha-acetyltransferase activity of the N-terminal acetyltransferase A complex (also called the NatA complex). The multiprotein complexes probably constitute the major contributor for N-terminal acetylation at the ribosome exit tunnel, with NAA10 acetylating all amino termini that are devoid of methionine and NAA50 acetylating other peptides. Required for sister chromatid cohesion during mitosis by promoting binding of CDCA5/sororin to cohesin: may act by counteracting the function of NAA10. This Mus musculus (Mouse) protein is N-alpha-acetyltransferase 50.